The following is a 76-amino-acid chain: Acyl carrier protein (76 aa).

The 76-residue stretch at 1–76 folds into the Carrier domain; sequence MSVEEKISKI…DAIAYIKNKQ (76 aa). Residue S36 is modified to O-(pantetheine 4'-phosphoryl)serine.

It belongs to the acyl carrier protein (ACP) family. 4'-phosphopantetheine is transferred from CoA to a specific serine of apo-ACP by AcpS. This modification is essential for activity because fatty acids are bound in thioester linkage to the sulfhydryl of the prosthetic group.

It localises to the cytoplasm. Its pathway is lipid metabolism; fatty acid biosynthesis. In terms of biological role, carrier of the growing fatty acid chain in fatty acid biosynthesis. The protein is Acyl carrier protein of Nitratidesulfovibrio vulgaris (strain DSM 19637 / Miyazaki F) (Desulfovibrio vulgaris).